Consider the following 520-residue polypeptide: Mu-like prophage FluMu protein gp29 (520 aa).

It to phage Mu protein gp29.

This is Mu-like prophage FluMu protein gp29 from Haemophilus influenzae (strain ATCC 51907 / DSM 11121 / KW20 / Rd).